The following is a 176-amino-acid chain: MSSNQQPVVLGKLGSCHGIKGWLKITAYTDSVEGIFDYSPWLIKENGEWREVKVIQWRYQGKAVVAELEGVTTRERAQMLTNCEIGILPEQMNALPEDEFYWRDLIGCEVINTNGYNMGVVDQIVETGSNDVLLVKANAKDSFGKVERMLPFVPGQFILKVDIQGKQILVDWDPDF.

The 80-residue stretch at 97–176 (EDEFYWRDLI…QILVDWDPDF (80 aa)) folds into the PRC barrel domain.

The protein belongs to the RimM family. Binds ribosomal protein uS19.

The protein localises to the cytoplasm. Functionally, an accessory protein needed during the final step in the assembly of 30S ribosomal subunit, possibly for assembly of the head region. Essential for efficient processing of 16S rRNA. May be needed both before and after RbfA during the maturation of 16S rRNA. It has affinity for free ribosomal 30S subunits but not for 70S ribosomes. In Shewanella sp. (strain MR-4), this protein is Ribosome maturation factor RimM.